Here is a 413-residue protein sequence, read N- to C-terminus: Aspartate aminotransferase, cytoplasmic (413 aa).

Positions 39, 141, and 195 each coordinate L-aspartate. Lysine 259 carries the post-translational modification N6-(pyridoxal phosphate)lysine. Arginine 387 provides a ligand contact to L-aspartate.

The protein belongs to the class-I pyridoxal-phosphate-dependent aminotransferase family. As to quaternary structure, homodimer. The cofactor is pyridoxal 5'-phosphate.

The protein localises to the cytoplasm. It catalyses the reaction L-aspartate + 2-oxoglutarate = oxaloacetate + L-glutamate. The enzyme catalyses L-cysteine + 2-oxoglutarate = 2-oxo-3-sulfanylpropanoate + L-glutamate. It carries out the reaction (2S)-2-aminobutanoate + 2-oxoglutarate = 2-oxobutanoate + L-glutamate. The catalysed reaction is 3-sulfino-L-alanine + 2-oxoglutarate = 3-sulfinopyruvate + L-glutamate. Functionally, biosynthesis of L-glutamate from L-aspartate or L-cysteine. Important regulator of levels of glutamate, the major excitatory neurotransmitter of the vertebrate central nervous system. Acts as a scavenger of glutamate in brain neuroprotection. The aspartate aminotransferase activity is involved in hepatic glucose synthesis during development and in adipocyte glyceroneogenesis. Using L-cysteine as substrate, regulates levels of mercaptopyruvate, an important source of hydrogen sulfide. Mercaptopyruvate is converted into H(2)S via the action of 3-mercaptopyruvate sulfurtransferase (3MST). Hydrogen sulfide is an important synaptic modulator and neuroprotectant in the brain. This is Aspartate aminotransferase, cytoplasmic from Sus scrofa (Pig).